A 452-amino-acid polypeptide reads, in one-letter code: Scaffold protein ILK (452 aa).

Position 1 is an N-acetylmethionine (M1). ANK repeat units lie at residues D2–G30, D31–M63, N64–V96, N97–C129, and N130–R174. The interval H33–K139 is interaction with LIMS1. Position 173 is a phosphothreonine (T173). Residues G180–W212 are PH-like; mediates interaction with TGFB1I1. A Phosphoserine modification is found at S186. Positions L193 to L446 constitute a Protein kinase domain. ATP-binding residues include N200, N202, H203, and S204. S246 is subject to Phosphoserine. Residues H270, M272, and N279 each contribute to the ATP site. D339 is a Mg(2+) binding site. Residue K341 participates in ATP binding. Positions K363–R371 match the Nuclear localization signal motif. Position 426 is an N6-acetyllysine (K426).

This sequence belongs to the protein kinase superfamily. TKL Ser/Thr protein kinase family. Component of the heterotrimeric IPP (ILK-PINCH-PARVIN) complex composed of ILK, LIMS1/PINCH and PARVA; the complex binds to F-actin via the C-terminal tail of LIMS1 and the N-terminal region of PARVA, promoting F-actin filament bundling. Formation of the IPP complex is dependent on protein kinase C and precedes integrin-mediated cell adhesion and spreading. ILK also interacts with LIMS2/PINCH2 and with PARVB and PARVG which may substitute for LIMS1 and PARVA in the IPP complex; PARVA and PARVB compete for the same binding site. Interaction with PARVG promotes the establishment of cell polarity required for leukocyte migration. Interacts with the cytoplasmic domain of integrin ITGB1 and may also interact with integrins ITGB2, ITGB3 and/or ITGB5. Interacts probably also with TGFB1I1. Interacts (via ANK repeats) with EPHA1 (via SAM domain); stimulated by EFNA1 but independent of the kinase activity of EPHA1. Interacts with FERMT2. Interacts with LIMD2; leading to activate the protein kinase activity. Interacts with PXN/PAXILLIN (via LD motif 4). Interacts with CCDC25 (via cytoplasmic region); initiating the ILK-PARVB cascade to induce cytoskeleton rearrangement and directional migration of cells. Interacts with IQGAP1; the interaction is required for localization of IQGAP1 to the cell cortex. In terms of processing, phosphorylation by PAK1 modulates ILK subcellular location by promoting its nuclear export. Highly expressed in lung, heart, kidney, liver, brain, spleen and skeletal muscle. Weakly expressed in testis.

The protein localises to the cell junction. It is found in the focal adhesion. Its subcellular location is the cell membrane. The protein resides in the cytoplasm. It localises to the myofibril. The protein localises to the sarcomere. It is found in the cell projection. Its subcellular location is the lamellipodium. The protein resides in the nucleus. It localises to the cytoskeleton. The protein localises to the microtubule organizing center. It is found in the centrosome. Its subcellular location is the cell cortex. Its function is as follows. Scaffold protein which mediates protein-protein interactions during a range of cellular events including focal adhesion assembly, cell adhesion and cell migration. Regulates integrin-mediated signal transduction by contributing to inside-out integrin activation. Recruits PARVA and LIMS1/PITCH to form the heterotrimeric IPP (ILK-PINCH-PARVIN) complex which binds to F-actin via the C-terminal tail of LIMS1 and the N-terminal region of PARVA, promoting F-actin filament bundling, a process required to generate force for actin cytoskeleton reorganization and subsequent dynamic cell adhesion events such as cell spreading and migration. Binding to PARVA promotes effective assembly of ILK into focal adhesions while PARVA-bound ILK can simultaneously engage integrin-beta cytoplasmic tails to mediate cell adhesion. Plays a role with PARVG in promoting the cell adhesion and spreading of leukocytes. Acts as an upstream effector of both AKT1/PKB and GSK3. Mediates trafficking of caveolae to the cell surface in an ITGB1-dependent manner by promoting the recruitment of IQGAP1 to the cell cortex which cooperates with its effector DIAPH1 to locally stabilize microtubules and allow stable insertion of caveolae into the plasma membrane. Required for the maintenance of mitotic spindle integrity by promoting phosphorylation of TACC3 by AURKA. Associates with chromatin and may act as a negative regulator of transcription when located in the nucleus. This is Scaffold protein ILK from Mus musculus (Mouse).